Consider the following 69-residue polypeptide: Cytochrome c oxidase subunit 8A, mitochondrial (69 aa).

A mitochondrion-targeting transit peptide spans 1-25 (MSVLTPLLLRGLTGSARRLPVPRAK). Residues 2–19 (SVLTPLLLRGLTGSARRL) carry the SIFI-degron motif. At 26 to 36 (IHSLPPEEKLG) the chain is on the mitochondrial matrix side. A helical membrane pass occupies residues 37-60 (IMELAVGLTSCFVTFLLPAGWILS). Residues 61 to 69 (HLETYRRPE) are Mitochondrial intermembrane-facing.

The protein belongs to the cytochrome c oxidase VIII family. In terms of assembly, component of the cytochrome c oxidase (complex IV, CIV), a multisubunit enzyme composed of 14 subunits. The complex is composed of a catalytic core of 3 subunits MT-CO1, MT-CO2 and MT-CO3, encoded in the mitochondrial DNA, and 11 supernumerary subunits COX4I, COX5A, COX5B, COX6A, COX6B, COX6C, COX7A, COX7B, COX7C, COX8 and NDUFA4, which are encoded in the nuclear genome. The complex exists as a monomer or a dimer and forms supercomplexes (SCs) in the inner mitochondrial membrane with NADH-ubiquinone oxidoreductase (complex I, CI) and ubiquinol-cytochrome c oxidoreductase (cytochrome b-c1 complex, complex III, CIII), resulting in different assemblies (supercomplex SCI(1)III(2)IV(1) and megacomplex MCI(2)III(2)IV(2)). Post-translationally, in response to mitochondrial stress, the precursor protein is ubiquitinated by the SIFI complex in the cytoplasm before mitochondrial import, leading to its degradation. Within the SIFI complex, UBR4 initiates ubiquitin chain that are further elongated or branched by KCMF1.

It is found in the mitochondrion inner membrane. It functions in the pathway energy metabolism; oxidative phosphorylation. Functionally, component of the cytochrome c oxidase, the last enzyme in the mitochondrial electron transport chain which drives oxidative phosphorylation. The respiratory chain contains 3 multisubunit complexes succinate dehydrogenase (complex II, CII), ubiquinol-cytochrome c oxidoreductase (cytochrome b-c1 complex, complex III, CIII) and cytochrome c oxidase (complex IV, CIV), that cooperate to transfer electrons derived from NADH and succinate to molecular oxygen, creating an electrochemical gradient over the inner membrane that drives transmembrane transport and the ATP synthase. Cytochrome c oxidase is the component of the respiratory chain that catalyzes the reduction of oxygen to water. Electrons originating from reduced cytochrome c in the intermembrane space (IMS) are transferred via the dinuclear copper A center (CU(A)) of subunit 2 and heme A of subunit 1 to the active site in subunit 1, a binuclear center (BNC) formed by heme A3 and copper B (CU(B)). The BNC reduces molecular oxygen to 2 water molecules using 4 electrons from cytochrome c in the IMS and 4 protons from the mitochondrial matrix. The protein is Cytochrome c oxidase subunit 8A, mitochondrial (COX8A) of Hylobates agilis (Agile gibbon).